We begin with the raw amino-acid sequence, 799 residues long: Histidine biosynthesis trifunctional protein (799 aa).

Positions 1–229 (MVLPILPLID…FIVEQENVGF (229 aa)) are phosphoribosyl-AMP cyclohydrolase. The phosphoribosyl-ATP pyrophosphohydrolase stretch occupies residues 230–312 (CHLETMSCFG…FYFALAKLVT (83 aa)). A histidinol dehydrogenase region spans residues 313 to 799 (NNVSLKDVEN…KLGLIPKDFQ (487 aa)). Residues Q618 and H621 each contribute to the Zn(2+) site. Active-site residues include E687 and H688. Residues D721 and H780 each coordinate Zn(2+).

The protein in the C-terminal section; belongs to the histidinol dehydrogenase family. Zn(2+) is required as a cofactor.

It carries out the reaction 1-(5-phospho-beta-D-ribosyl)-5'-AMP + H2O = 1-(5-phospho-beta-D-ribosyl)-5-[(5-phospho-beta-D-ribosylamino)methylideneamino]imidazole-4-carboxamide. The enzyme catalyses 1-(5-phospho-beta-D-ribosyl)-ATP + H2O = 1-(5-phospho-beta-D-ribosyl)-5'-AMP + diphosphate + H(+). The catalysed reaction is L-histidinol + 2 NAD(+) + H2O = L-histidine + 2 NADH + 3 H(+). It functions in the pathway amino-acid biosynthesis; L-histidine biosynthesis; L-histidine from 5-phospho-alpha-D-ribose 1-diphosphate: step 2/9. It participates in amino-acid biosynthesis; L-histidine biosynthesis; L-histidine from 5-phospho-alpha-D-ribose 1-diphosphate: step 3/9. Its pathway is amino-acid biosynthesis; L-histidine biosynthesis; L-histidine from 5-phospho-alpha-D-ribose 1-diphosphate: step 9/9. This chain is Histidine biosynthesis trifunctional protein (HIS4), found in Saccharomyces bayanus (Yeast).